A 901-amino-acid polypeptide reads, in one-letter code: Serine/threonine-protein kinase-like protein CR4 (901 aa).

The signal sequence occupies residues 1-22 (MDIVPVVALCCCLVLLPSWAYG). 7 consecutive repeat copies span residues 31–66 (VSYG…GAPS), 70–105 (FVGV…GVPQ), 123–158 (LCAL…TVTG), 160–193 (VSAI…GVIG), 201–234 (FQSI…QMST), 251–285 (MVSV…TLAP), and 290–328 (VYAI…AVSP). Residues 31–328 (VSYGEDGPVF…PLALPMAVSP (298 aa)) are 7 X 36 AA repeats. Asn-149 and Asn-177 each carry an N-linked (GlcNAc...) asparagine glycan. N-linked (GlcNAc...) asparagine glycosylation is present at Asn-280. A TNFR-Cys repeat occupies 335–389 (SCSHGYYEYANHGEVGSGSKTCKPANSRLCLPCSVGCPDDSYESSPCNATADRVC). 3 cysteine pairs are disulfide-bonded: Cys-336–Cys-364, Cys-367–Cys-381, and Cys-371–Cys-389. An N-linked (GlcNAc...) asparagine glycan is attached at Asn-382. The helical transmembrane segment at 423–443 (IFVAEIAFAVILVFSVTAIAC) threads the bilayer. Residues 504–781 (FSEDSQVGKG…KVTTALERAL (278 aa)) form the Protein kinase domain. Residues 510-518 (VGKGSFSCV) and Lys-532 each bind ATP. Residue Asp-633 is the Proton acceptor of the active site. The segment at 845 to 901 (VTSSQRRKSSASEADMDGRTTTDGRNVGSSIGDGLRSLEEEISPASPQENLYLQHNF) is disordered. Residues 889 to 901 (ASPQENLYLQHNF) show a composition bias toward polar residues.

Belongs to the protein kinase superfamily. Ser/Thr protein kinase family. In terms of assembly, homodimer. In terms of processing, autophosphorylated. As to expression, specifically expressed in the epidermal cells of paleas and lemmas.

Its subcellular location is the cell membrane. It is found in the endosome. It localises to the multivesicular body membrane. The enzyme catalyses L-seryl-[protein] + ATP = O-phospho-L-seryl-[protein] + ADP + H(+). It catalyses the reaction L-threonyl-[protein] + ATP = O-phospho-L-threonyl-[protein] + ADP + H(+). Its function is as follows. Receptor protein kinase. Could play a role in a differentiation signal. Controls formative cell division in meristems. Regulates epidermal cell differentiation in many organs. During floral organogenesis, required to maintain the interlocking of the palea and lemma, and fertility. Triggers culm elongation. The chain is Serine/threonine-protein kinase-like protein CR4 from Oryza sativa subsp. japonica (Rice).